A 127-amino-acid polypeptide reads, in one-letter code: Large ribosomal subunit protein bL20 (127 aa).

This sequence belongs to the bacterial ribosomal protein bL20 family.

Binds directly to 23S ribosomal RNA and is necessary for the in vitro assembly process of the 50S ribosomal subunit. It is not involved in the protein synthesizing functions of that subunit. In Bifidobacterium longum (strain NCC 2705), this protein is Large ribosomal subunit protein bL20.